A 414-amino-acid chain; its full sequence is MSLEMFDKEIFDLTNKELERQCEGLEMIASENFTLPEVMEVMGSILTNKYAEGYPGKRYYGGCEFVDEIETLAIERCKKLFNCKFANVQPNSGSQANQGVYAALINPGDKILGMDLSHGGHLTHGAKVSSSGKMYESCFYGVELDGRIDYEKVREIAKKEKPKLIVCGASAYARVIDFAKFREIADEIGAYLFADIAHIAGLVVAGEHPSPFPYAHVVSSTTHKTLRGPRGGIIMTNDEELAKKINSAIFPGIQGGPLMHVIAAKAVGFKFNLSDEWKVYAKQVRTNAQVLANVLMDRKFKLVSDGTDNHLVLMSFLDREFSGKDADLALGNAGITANKNTVPGEIRSPFITSGLRLGTPALTARGFKEKEMEIVSNYIADILDDVNNEKLQENIKQELKKLASNFIIYERAMF.

(6S)-5,6,7,8-tetrahydrofolate contacts are provided by residues Leu-116 and 120-122 (GHL). Lys-224 carries the N6-(pyridoxal phosphate)lysine modification. Residues Glu-240 and 348 to 350 (SPF) contribute to the (6S)-5,6,7,8-tetrahydrofolate site.

Belongs to the SHMT family. Homodimer. It depends on pyridoxal 5'-phosphate as a cofactor.

It is found in the cytoplasm. The catalysed reaction is (6R)-5,10-methylene-5,6,7,8-tetrahydrofolate + glycine + H2O = (6S)-5,6,7,8-tetrahydrofolate + L-serine. The protein operates within one-carbon metabolism; tetrahydrofolate interconversion. It participates in amino-acid biosynthesis; glycine biosynthesis; glycine from L-serine: step 1/1. In terms of biological role, catalyzes the reversible interconversion of serine and glycine with tetrahydrofolate (THF) serving as the one-carbon carrier. This reaction serves as the major source of one-carbon groups required for the biosynthesis of purines, thymidylate, methionine, and other important biomolecules. Also exhibits THF-independent aldolase activity toward beta-hydroxyamino acids, producing glycine and aldehydes, via a retro-aldol mechanism. This chain is Serine hydroxymethyltransferase, found in Campylobacter jejuni subsp. jejuni serotype O:2 (strain ATCC 700819 / NCTC 11168).